The primary structure comprises 300 residues: Cation-efflux pump FieF (300 aa).

Helical transmembrane passes span 11–31, 40–60, 81–101, and 114–134; these read LAAV…VFAW, LASL…LLVV, LAAL…ILTG, and PEVG…LVSF. Zn(2+) is bound by residues Asp-45 and Asp-49. His-153 and Asp-157 together coordinate Zn(2+). The next 2 helical transmembrane spans lie at 156-176 and 182-202; these read SDLL…KGIT and FALG…YDAV.

The protein belongs to the cation diffusion facilitator (CDF) transporter (TC 2.A.4) family. FieF subfamily. Homodimer.

It localises to the cell inner membrane. It catalyses the reaction Zn(2+)(in) + H(+)(out) = Zn(2+)(out) + H(+)(in). It carries out the reaction Cd(2+)(in) + H(+)(out) = Cd(2+)(out) + H(+)(in). The catalysed reaction is Fe(2+)(in) + H(+)(out) = Fe(2+)(out) + H(+)(in). In terms of biological role, divalent metal cation transporter which exports Zn(2+), Cd(2+) and possibly Fe(2+). May be involved in zinc and iron detoxification by efflux. In Pectobacterium atrosepticum (strain SCRI 1043 / ATCC BAA-672) (Erwinia carotovora subsp. atroseptica), this protein is Cation-efflux pump FieF.